The primary structure comprises 364 residues: Heat-inducible transcription repressor HrcA (364 aa).

Belongs to the HrcA family.

In terms of biological role, negative regulator of class I heat shock genes (grpE-dnaK-dnaJ and groELS operons). Prevents heat-shock induction of these operons. This Cyanothece sp. (strain PCC 7425 / ATCC 29141) protein is Heat-inducible transcription repressor HrcA.